The following is a 354-amino-acid chain: Alanine racemase (354 aa).

K33 functions as the Proton acceptor; specific for D-alanine in the catalytic mechanism. N6-(pyridoxal phosphate)lysine is present on K33. R127 lines the substrate pocket. Y251 acts as the Proton acceptor; specific for L-alanine in catalysis. M299 serves as a coordination point for substrate.

This sequence belongs to the alanine racemase family. Requires pyridoxal 5'-phosphate as cofactor.

It catalyses the reaction L-alanine = D-alanine. It participates in amino-acid biosynthesis; D-alanine biosynthesis; D-alanine from L-alanine: step 1/1. Its function is as follows. Catalyzes the interconversion of L-alanine and D-alanine. May also act on other amino acids. This is Alanine racemase (alr) from Fusobacterium nucleatum subsp. nucleatum (strain ATCC 25586 / DSM 15643 / BCRC 10681 / CIP 101130 / JCM 8532 / KCTC 2640 / LMG 13131 / VPI 4355).